The following is a 419-amino-acid chain: Prolyl hydroxylase EGLN2 (419 aa).

Low complexity-rich tracts occupy residues 1 to 18 and 64 to 73; these read MDSP…PQLP and TTATATTTTA. Disordered stretches follow at residues 1-89 and 108-181; these read MDSP…GELW and AAQG…REEV. A Bipartite nuclear localization signal motif is present at residues 89–134; the sequence is WPLQSEGAAALVTKECQRLAAQGARPEAPKRKWAKDGGDAPSPSKR. Positions 115 to 126 are enriched in basic and acidic residues; it reads EAPKRKWAKDGG. Serine 130 carries the phosphoserine modification. Residues 154–174 are compositionally biased toward low complexity; sequence SGASNSSSSSSNTTSSSGEAS. Residues 237–247 are beta(2)beta(3) 'finger-like' loop; it reads VSQRAIPPRSI. A Fe2OG dioxygenase domain is found at 290 to 388; sequence GRTKAMVACY…RYAITVWYFD (99 aa). Residues histidine 309, aspartate 311, and histidine 370 each coordinate Fe cation. Arginine 379 serves as a coordination point for 2-oxoglutarate.

As to quaternary structure, interacts with E3 ligase SIAH2. Interacts with LIMD1, WTIP and AJUBA. It depends on Fe(2+) as a cofactor. L-ascorbate serves as cofactor. Post-translationally, ubiquitinated by SIAH1 and/or SIAH2 in response to the unfolded protein response (UPR), leading to its degradation. Highly expressed in testis, expression was also detected in the heart brain, liver kidney and lung. Expression was lowest in spleen and skeletal muscle. Constitutively expressed during differentiation of C2C12 skeletal myocytes.

Its subcellular location is the nucleus. It carries out the reaction L-prolyl-[protein] + 2-oxoglutarate + O2 = trans-4-hydroxy-L-prolyl-[protein] + succinate + CO2. The catalysed reaction is L-prolyl-[hypoxia-inducible factor alpha subunit] + 2-oxoglutarate + O2 = trans-4-hydroxy-L-prolyl-[hypoxia-inducible factor alpha subunit] + succinate + CO2. Prolyl hydroxylase that mediates hydroxylation of proline residues in target proteins, such as ATF4, IKBKB, CEP192 and HIF1A. Target proteins are preferentially recognized via a LXXLAP motif. Cellular oxygen sensor that catalyzes, under normoxic conditions, the post-translational formation of 4-hydroxyproline in hypoxia-inducible factor (HIF) alpha proteins. Hydroxylates a specific proline found in each of the oxygen-dependent degradation (ODD) domains (N-terminal, NODD, and C-terminal, CODD) of HIF1A. Also hydroxylates HIF2A. Has a preference for the CODD site for both HIF1A and HIF2A. Hydroxylated HIFs are then targeted for proteasomal degradation via the von Hippel-Lindau ubiquitination complex. Under hypoxic conditions, the hydroxylation reaction is attenuated allowing HIFs to escape degradation resulting in their translocation to the nucleus, heterodimerization with HIF1B, and increased expression of hypoxy-inducible genes. EGLN2 is involved in regulating hypoxia tolerance and apoptosis in cardiac and skeletal muscle. Also regulates susceptibility to normoxic oxidative neuronal death. Links oxygen sensing to cell cycle and primary cilia formation by hydroxylating the critical centrosome component CEP192 which promotes its ubiquitination and subsequent proteasomal degradation. Hydroxylates IKBKB, mediating NF-kappa-B activation in hypoxic conditions. Also mediates hydroxylation of ATF4, leading to decreased protein stability of ATF4. The polypeptide is Prolyl hydroxylase EGLN2 (Mus musculus (Mouse)).